The chain runs to 149 residues: Calmodulin-2 (149 aa).

Alanine 2 bears the N-acetylalanine mark. 4 EF-hand domains span residues 8-43, 44-79, 81-116, and 117-149; these read EQIAEFKEAFSLFDKDGDGCITTKELGTVMRSLGQN, PTEAELQDMISEVDADQNGTIDFPEFLNLMARKMKD, DSEEELKEAFKVFDKDQNGYISAADVRHVMTNLGEK, and LTDEEVDEMIREADMDGDGQVNYEEFVRMMLAK. Residues aspartate 21, aspartate 23, aspartate 25, cysteine 27, glutamate 32, aspartate 57, aspartate 59, asparagine 61, threonine 63, glutamate 68, aspartate 94, aspartate 96, asparagine 98, tyrosine 100, and aspartate 105 each coordinate Ca(2+). Residue lysine 116 is modified to N6,N6,N6-trimethyllysine. Ca(2+) is bound by residues aspartate 130, aspartate 132, aspartate 134, glutamine 136, and glutamate 141.

Belongs to the calmodulin family.

Its function is as follows. Calmodulin mediates the control of a large number of enzymes, ion channels and other proteins by Ca(2+). Among the enzymes to be stimulated by the calmodulin-Ca(2+) complex are a number of protein kinases and phosphatases. This chain is Calmodulin-2 (CAM72), found in Petunia hybrida (Petunia).